Reading from the N-terminus, the 471-residue chain is MSDAPVSSSAANAMWGGRFAAGPDAIMQAINASIGFDKRLYAQDIRGSRAHAAMLAAQGILSSRDAEAIGEGLLTVLSEIEAGGFPFRVGLEDIHMNVEARLKELIGEPAGRLHTARSRNDQVAVDFRLWVRDQCDAAITGIEALMQAFVAQAEAGADWVMPGFTHLQTAQPVTWGHHMLAYVEMLARDRSRFADARARMNECPLGAAALAGTGFPIDRHMTAAALGFDRPTANSLDSVSDRDFALEFLSASAICALHLSRFAEELVIWSSAQFRFVRLSDRWTTGSSIMPQKKNPDAAELLRAKLGRVLGAAVALFTVMKGLPLTYSKDMQEDKEQVFDAADTLMLGLAAMTGMVADMQANRESLAAAAASGFSTATDLADWLVRELDLPFRDAHHVTGTLVARAEARGCDLPDLTLAEMQEVHPGIREDVFAVLGVANSVRSRTSYGGTAPDNVRAQAARWKELLGGTA.

This sequence belongs to the lyase 1 family. Argininosuccinate lyase subfamily.

The protein localises to the cytoplasm. It carries out the reaction 2-(N(omega)-L-arginino)succinate = fumarate + L-arginine. The protein operates within amino-acid biosynthesis; L-arginine biosynthesis; L-arginine from L-ornithine and carbamoyl phosphate: step 3/3. In Cereibacter sphaeroides (strain ATCC 17025 / ATH 2.4.3) (Rhodobacter sphaeroides), this protein is Argininosuccinate lyase.